The primary structure comprises 635 residues: Glutamine sensor PIB2 (635 aa).

The disordered stretch occupies residues 1–110; sequence MTALHSVSKT…GTGFVDRKQQ (110 aa). The interval 1-164 is may play a role in attenuating TORC1 signaling; the sequence is MTALHSVSKT…KTLPFTDDQR (164 aa). A compositionally biased stretch (basic and acidic residues) spans 33 to 44; that stretch reads RNHDYRGRKGDE. Ser46 and Ser53 each carry phosphoserine. A Phosphothreonine modification is found at Thr56. Polar residues predominate over residues 67 to 85; the sequence is STHSEQSILSSISLKSMVN. Residues Ser73, Ser113, Ser124, Ser148, Ser165, and Ser174 each carry the phosphoserine modification. Disordered regions lie at residues 123–181 and 224–254; these read NSAE…VSRG and SSNL…TSKV. Residues 238-254 show a composition bias toward low complexity; that stretch reads SSSSSTSSVSSSSTSKV. Phosphoserine is present on residues Ser300, Ser309, and Ser381. The required for interaction with TORC1 stretch occupies residues 304–440; sequence LPQPASSTNL…PTISNRNSAR (137 aa). The FYVE-type; atypical zinc-finger motif lies at 452–527; it reads DSKRNSCRYC…ICDDCLVEYE (76 aa). Residues Cys458, Cys461, Cys474, Cys477, Cys482, His485, Cys519, and Cys522 each contribute to the Zn(2+) site. Disordered stretches follow at residues 534–557 and 570–623; these read HNAN…DNRK and ALFR…GSVI. 2 stretches are compositionally biased toward acidic residues: residues 543-553 and 601-616; these read INVEEGEDDDN and EEAD…EEGN. A may be required for TORC1 activation region spans residues 620 to 635; sequence GSVIGSVPANWNWSSF.

As to quaternary structure, interacts with the TORC1 complex when activated by glutamine or cysteine. Interacts with TOR1; glutamine enhances the interaction. Interacts with KOG1; glutamine enhances the interaction. Interacts with TCO89. Interacts with LST8; glutamine enhances the interaction. Interacts with TOR2; glutamine enhances the interaction.

It is found in the vacuole membrane. With respect to regulation, activated by glutamine. May also be activated by cysteine. Functions as an intracellular glutamine sensor that directly activates the TORC1 signaling pathway, to promote cell growth when glutamine is available. May play a role in repressing NPR1 activity independently of TORC1 signaling. The polypeptide is Glutamine sensor PIB2 (Saccharomyces cerevisiae (strain ATCC 204508 / S288c) (Baker's yeast)).